Consider the following 222-residue polypeptide: NADH dehydrogenase [ubiquinone] iron-sulfur protein 8-A, mitochondrial (222 aa).

4Fe-4S ferredoxin-type domains are found at residues 114–143 (RRYPTGEERCIACKLCEAVCPAQAITIEAE) and 153–182 (TRYDIDMTKCIYCGFCQEACPVDAIVEGPN). Residues C123, C126, C129, C133, C162, C165, C168, and C172 each contribute to the [4Fe-4S] cluster site.

It belongs to the complex I 23 kDa subunit family. Complex I is composed of at least 49 different subunits. This is a component of the iron-sulfur (IP) fragment of the enzyme. [4Fe-4S] cluster serves as cofactor.

Its subcellular location is the mitochondrion. It carries out the reaction a ubiquinone + NADH + 5 H(+)(in) = a ubiquinol + NAD(+) + 4 H(+)(out). Its function is as follows. Core subunit of the mitochondrial membrane respiratory chain NADH dehydrogenase (Complex I) that is believed to belong to the minimal assembly required for catalysis. Complex I functions in the transfer of electrons from NADH to the respiratory chain. The immediate electron acceptor for the enzyme is believed to be ubiquinone. May donate electrons to ubiquinone. The polypeptide is NADH dehydrogenase [ubiquinone] iron-sulfur protein 8-A, mitochondrial (Arabidopsis thaliana (Mouse-ear cress)).